The chain runs to 216 residues: Adenylate kinase (216 aa).

10–15 (GAGKGT) is an ATP binding site. The NMP stretch occupies residues 30 to 59 (STGDIFRAAIKNQTPMGVEAKKFIDKGELV). AMP contacts are provided by residues T31, R36, 57–59 (ELV), 85–88 (GFPR), and Q92. The LID stretch occupies residues 126 to 164 (GRFICRNCGTTYHRLYNPTKVEGTCDVCGGHDFYQRDDD). R127 serves as a coordination point for ATP. Zn(2+) contacts are provided by C130 and C133. 136-137 (TY) contributes to the ATP binding site. Positions 150 and 153 each coordinate Zn(2+). R161 and R172 together coordinate AMP. Residue Q200 participates in ATP binding.

It belongs to the adenylate kinase family. As to quaternary structure, monomer.

It is found in the cytoplasm. The enzyme catalyses AMP + ATP = 2 ADP. It functions in the pathway purine metabolism; AMP biosynthesis via salvage pathway; AMP from ADP: step 1/1. In terms of biological role, catalyzes the reversible transfer of the terminal phosphate group between ATP and AMP. Plays an important role in cellular energy homeostasis and in adenine nucleotide metabolism. The sequence is that of Adenylate kinase from Limosilactobacillus fermentum (strain NBRC 3956 / LMG 18251) (Lactobacillus fermentum).